Here is a 142-residue protein sequence, read N- to C-terminus: MVLSPADKSNVKAAWGKVGGHAGDYGAEALERMFLSFPTTKTYFPHFDLSHGSAQVKGHGKKVADALTNAVAHVDDMPNALSALSDLHAHKLRVDPVNFKLLSHCLLVTLAAHHPADFTPAVHASLDKFLASVSTVLTSKYR.

Positions 2–142 constitute a Globin domain; that stretch reads VLSPADKSNV…VSTVLTSKYR (141 aa). Serine 4 is subject to Phosphoserine. N6-succinyllysine occurs at positions 8 and 12. Lysine 17 is subject to N6-acetyllysine; alternate. Lysine 17 carries the N6-succinyllysine; alternate modification. Tyrosine 25 carries the post-translational modification Phosphotyrosine. Serine 36 carries the post-translational modification Phosphoserine. N6-succinyllysine is present on lysine 41. Serine 50 is subject to Phosphoserine. Histidine 59 contributes to the O2 binding site. Histidine 88 contributes to the heme b binding site. Residue serine 103 is modified to Phosphoserine. The residue at position 109 (threonine 109) is a Phosphothreonine. Phosphoserine is present on residues serine 125 and serine 132. Phosphothreonine occurs at positions 135 and 138. Residue serine 139 is modified to Phosphoserine.

The protein belongs to the globin family. As to quaternary structure, heterotetramer of two alpha chains and two beta chains. In terms of tissue distribution, red blood cells.

Its function is as follows. Involved in oxygen transport from the lung to the various peripheral tissues. Hemopressin acts as an antagonist peptide of the cannabinoid receptor CNR1. Hemopressin-binding efficiently blocks cannabinoid receptor CNR1 and subsequent signaling. This is Hemoglobin subunit alpha (HBA) from Ateles geoffroyi (Black-handed spider monkey).